Consider the following 671-residue polypeptide: Zinc finger protein 750 (671 aa).

The segment at 25–51 (YKCFQCPFTCNEKSHLFNHMKYGLCKN) adopts a CCHC-type zinc-finger fold. Zn(2+)-binding residues include cysteine 27, cysteine 30, histidine 43, and cysteine 49. Disordered stretches follow at residues 66–87 (PKVN…SPVP), 366–433 (ETSP…KDFT), and 592–671 (SSPG…PRVS). 2 stretches are compositionally biased toward polar residues: residues 67 to 78 (KVNSTDQKQPSN) and 402 to 412 (SPTNFTQNSQG).

The protein resides in the nucleus. Transcription factor involved in epidermis differentiation. The chain is Zinc finger protein 750 (znf750) from Xenopus tropicalis (Western clawed frog).